Consider the following 439-residue polypeptide: Protein translocase subunit SecY (439 aa).

The next 10 membrane-spanning stretches (helical) occupy residues 28-48, 73-93, 127-147, 156-176, 179-199, 220-240, 276-296, 318-338, 375-395, and 401-421; these read ILITVGLLILCRLGIFIPVPG, IFSGGGLSALGVFALGILPYI, LTRYVSLGWALLQSIVIAVWV, PLFTIQTALALVAGSMFVMWI, LITERGIGNGASLLIFLNIVA, VGGIVILLIVFLATIVGIVFV, GVMPIIFASAILVLPFSLANF, IYALFYLVLIVAFSYFYSSLI, LTILGAVFLGLVAIIPTAVEG, and TFQGFGATSLLILVGVAIDTA.

This sequence belongs to the SecY/SEC61-alpha family. Component of the Sec protein translocase complex. Heterotrimer consisting of SecY, SecE and SecG subunits. The heterotrimers can form oligomers, although 1 heterotrimer is thought to be able to translocate proteins. Interacts with the ribosome. Interacts with SecDF, and other proteins may be involved. Interacts with SecA.

The protein resides in the cell inner membrane. Its subcellular location is the cellular thylakoid membrane. Functionally, the central subunit of the protein translocation channel SecYEG. Consists of two halves formed by TMs 1-5 and 6-10. These two domains form a lateral gate at the front which open onto the bilayer between TMs 2 and 7, and are clamped together by SecE at the back. The channel is closed by both a pore ring composed of hydrophobic SecY resides and a short helix (helix 2A) on the extracellular side of the membrane which forms a plug. The plug probably moves laterally to allow the channel to open. The ring and the pore may move independently. In Synechococcus elongatus (strain ATCC 33912 / PCC 7942 / FACHB-805) (Anacystis nidulans R2), this protein is Protein translocase subunit SecY.